Consider the following 1331-residue polypeptide: Probable serine/threonine-protein kinase DDB_G0272254 (1331 aa).

Composition is skewed to low complexity over residues 1–42, 96–116, and 153–175; these read METS…NSSS, NDNNNSSSSSSSSSSGNNNNN, and TQQTPTTTATTNTSTSTTNSTPS. Disordered regions lie at residues 1–43, 92–132, and 150–175; these read METS…SSSA, DKIC…QQIS, and ILNTQQTPTTTATTNTSTSTTNSTPS. A run of 2 helical transmembrane segments spans residues 201-221 and 224-244; these read FGFSPIYFVESIFIVLLIYIL and FVLKETSVYVISIFVIYFVIY. The span at 259 to 287 shows a compositional bias: low complexity; that stretch reads SINDSDSSSNNNNNNNNTTTTNNDSASTK. 4 disordered regions span residues 259-300, 320-419, 435-464, and 512-581; these read SIND…PETY, NLNN…LSKE, SVGKTHNRSSSGSDSIQPPPLPTGGSSHNI, and AHSN…VVGN. Residues 288 to 299 show a composition bias toward polar residues; it reads GNNNNEISSPET. Polar residues predominate over residues 436 to 450; the sequence is VGKTHNRSSSGSDSI. The span at 514 to 531 shows a compositional bias: low complexity; it reads SNNNNNNNNSNTNNNNNN. A compositionally biased stretch (polar residues) spans 532-555; sequence QSVSAPVSQLATPVYQTPGTNSVV. The segment covering 557-577 has biased composition (low complexity); sequence NLENDNENNNDSFSDINDNNS. Kelch repeat units follow at residues 665 to 710, 716 to 769, 770 to 816, 822 to 868, 909 to 959, and 962 to 1008; these read SLVL…NHDY, KFYL…RYGN, RFLL…GHTS, KLII…ELND, NIVM…LIKN, and KLFI…NNNN. Positions 834–860 are enriched in low complexity; sequence NNNNNNNNNNNNNNNNNNNNNNNNNNN. The interval 834 to 862 is disordered; sequence NNNNNNNNNNNNNNNNNNNNNNNNNNNKG. The disordered stretch occupies residues 976-1042; that stretch reads NNNSSSGGNN…NNNNNNNNNN (67 aa). In terms of domain architecture, Protein kinase spans 1073 to 1331; it reads IKIDKEIGKG…EITNYLTKTF (259 aa). Residues 1079–1087 and Lys-1100 contribute to the ATP site; that span reads IGKGHFSKV. Asp-1200 acts as the Proton acceptor in catalysis.

It belongs to the protein kinase superfamily. TKL Ser/Thr protein kinase family.

It localises to the membrane. The enzyme catalyses L-seryl-[protein] + ATP = O-phospho-L-seryl-[protein] + ADP + H(+). It carries out the reaction L-threonyl-[protein] + ATP = O-phospho-L-threonyl-[protein] + ADP + H(+). The chain is Probable serine/threonine-protein kinase DDB_G0272254 from Dictyostelium discoideum (Social amoeba).